The primary structure comprises 131 residues: Global transcriptional regulator Spx (131 aa).

An intrachain disulfide couples Cys10 to Cys13.

The protein belongs to the ArsC family. Spx subfamily. Interacts with the C-terminal domain of the alpha subunit of the RNAP.

The protein resides in the cytoplasm. Its function is as follows. Global transcriptional regulator that plays a key role in stress response and exerts either positive or negative regulation of genes. Acts by interacting with the C-terminal domain of the alpha subunit of the RNA polymerase (RNAP). This interaction can enhance binding of RNAP to the promoter region of target genes and stimulate their transcription, or block interaction of RNAP with activator. This chain is Global transcriptional regulator Spx, found in Staphylococcus epidermidis (strain ATCC 35984 / DSM 28319 / BCRC 17069 / CCUG 31568 / BM 3577 / RP62A).